Here is a 105-residue protein sequence, read N- to C-terminus: Early E3A 12.1 kDa protein (105 aa).

Belongs to the adenoviridae E3A-2 family.

Functionally, not yet known. The chain is Early E3A 12.1 kDa protein from Human adenovirus A serotype 12 (HAdV-12).